The following is a 655-amino-acid chain: Acetyl-coenzyme A synthetase (655 aa).

CoA contacts are provided by residues 196 to 199 (RGGR) and threonine 316. ATP is bound by residues 392 to 394 (GEP), 416 to 421 (DTWWQT), aspartate 508, and arginine 523. Serine 531 serves as a coordination point for CoA. Arginine 534 is a binding site for ATP. Mg(2+) is bound by residues valine 545, histidine 547, and valine 550. The residue at position 620 (lysine 620) is an N6-acetyllysine.

Belongs to the ATP-dependent AMP-binding enzyme family. Mg(2+) is required as a cofactor. Acetylated. Deacetylation by the SIR2-homolog deacetylase activates the enzyme.

It catalyses the reaction acetate + ATP + CoA = acetyl-CoA + AMP + diphosphate. Functionally, catalyzes the conversion of acetate into acetyl-CoA (AcCoA), an essential intermediate at the junction of anabolic and catabolic pathways. AcsA undergoes a two-step reaction. In the first half reaction, AcsA combines acetate with ATP to form acetyl-adenylate (AcAMP) intermediate. In the second half reaction, it can then transfer the acetyl group from AcAMP to the sulfhydryl group of CoA, forming the product AcCoA. The polypeptide is Acetyl-coenzyme A synthetase (Nitrosomonas europaea (strain ATCC 19718 / CIP 103999 / KCTC 2705 / NBRC 14298)).